The sequence spans 1179 residues: Dynein axonemal assembly factor 9 (1179 aa).

As to quaternary structure, interacts with ARL3.

Its function is as follows. May act as an effector for ARL3. The chain is Dynein axonemal assembly factor 9 from Mus musculus (Mouse).